The sequence spans 78 residues: Small ribosomal subunit protein uS15 (78 aa).

The protein belongs to the universal ribosomal protein uS15 family. In terms of assembly, part of the 30S ribosomal subunit. Forms a bridge to the 50S subunit in the 70S ribosome, contacting the 23S rRNA.

Its function is as follows. One of the primary rRNA binding proteins, it binds directly to 16S rRNA where it helps nucleate assembly of the platform of the 30S subunit by binding and bridging several RNA helices of the 16S rRNA. In terms of biological role, forms an intersubunit bridge (bridge B4) with the 23S rRNA of the 50S subunit in the ribosome. The polypeptide is Small ribosomal subunit protein uS15 (Karelsulcia muelleri (strain GWSS) (Sulcia muelleri)).